Reading from the N-terminus, the 103-residue chain is Pyrimidine/purine nucleoside phosphorylase (103 aa).

It belongs to the nucleoside phosphorylase PpnP family.

The enzyme catalyses a purine D-ribonucleoside + phosphate = a purine nucleobase + alpha-D-ribose 1-phosphate. The catalysed reaction is adenosine + phosphate = alpha-D-ribose 1-phosphate + adenine. It catalyses the reaction cytidine + phosphate = cytosine + alpha-D-ribose 1-phosphate. It carries out the reaction guanosine + phosphate = alpha-D-ribose 1-phosphate + guanine. The enzyme catalyses inosine + phosphate = alpha-D-ribose 1-phosphate + hypoxanthine. The catalysed reaction is thymidine + phosphate = 2-deoxy-alpha-D-ribose 1-phosphate + thymine. It catalyses the reaction uridine + phosphate = alpha-D-ribose 1-phosphate + uracil. It carries out the reaction xanthosine + phosphate = alpha-D-ribose 1-phosphate + xanthine. Its function is as follows. Catalyzes the phosphorolysis of diverse nucleosides, yielding D-ribose 1-phosphate and the respective free bases. Can use uridine, adenosine, guanosine, cytidine, thymidine, inosine and xanthosine as substrates. Also catalyzes the reverse reactions. The chain is Pyrimidine/purine nucleoside phosphorylase from Chlorobium chlorochromatii (strain CaD3).